The primary structure comprises 389 residues: GTPase Obg (389 aa).

The Obg domain maps to 1-159 (MKFVDEAVIR…RSLKLELMLL (159 aa)). Positions 122–144 (FHGLGNTRFKSSTNRAPRQKTLG) are disordered. The region spanning 160–333 (ADVGLLGMPN…LSLKLIDFIE (174 aa)) is the OBG-type G domain. Residues 166 to 173 (GMPNAGKS), 191 to 195 (FTTLV), 213 to 216 (DIPG), 283 to 286 (NKTD), and 314 to 316 (SAY) contribute to the GTP site. 2 residues coordinate Mg(2+): S173 and T193.

This sequence belongs to the TRAFAC class OBG-HflX-like GTPase superfamily. OBG GTPase family. As to quaternary structure, monomer. The cofactor is Mg(2+).

The protein localises to the cytoplasm. Its function is as follows. An essential GTPase which binds GTP, GDP and possibly (p)ppGpp with moderate affinity, with high nucleotide exchange rates and a fairly low GTP hydrolysis rate. Plays a role in control of the cell cycle, stress response, ribosome biogenesis and in those bacteria that undergo differentiation, in morphogenesis control. The polypeptide is GTPase Obg (Shewanella woodyi (strain ATCC 51908 / MS32)).